The chain runs to 91 residues: Small ribosomal subunit protein uS19 (91 aa).

The protein belongs to the universal ribosomal protein uS19 family.

In terms of biological role, protein S19 forms a complex with S13 that binds strongly to the 16S ribosomal RNA. The chain is Small ribosomal subunit protein uS19 from Acinetobacter baumannii (strain AB307-0294).